The chain runs to 355 residues: Peptide chain release factor 1 (355 aa).

N5-methylglutamine is present on Gln-233. Basic and acidic residues predominate over residues 282–293 (RKKEQARADSRR). The interval 282–305 (RKKEQARADSRRGQVGSGDRSERI) is disordered.

It belongs to the prokaryotic/mitochondrial release factor family. In terms of processing, methylated by PrmC. Methylation increases the termination efficiency of RF1.

It is found in the cytoplasm. Functionally, peptide chain release factor 1 directs the termination of translation in response to the peptide chain termination codons UAG and UAA. The protein is Peptide chain release factor 1 of Rickettsia rickettsii (strain Iowa).